The primary structure comprises 225 residues: Chromosome partition protein MukE (225 aa).

The segment at 197–225 is disordered; that stretch reads RDGEAMPIENHLQLNDETEESQPDSGEEE. Residues 212–225 are compositionally biased toward acidic residues; it reads DETEESQPDSGEEE.

The protein belongs to the MukE family. In terms of assembly, interacts, and probably forms a ternary complex, with MukF and MukB. The complex formation is stimulated by calcium or magnesium.

Its subcellular location is the cytoplasm. It localises to the nucleoid. Involved in chromosome condensation, segregation and cell cycle progression. May participate in facilitating chromosome segregation by condensation DNA from both sides of a centrally located replisome during cell division. Probably acts via its interaction with MukB and MukF. The polypeptide is Chromosome partition protein MukE (Salmonella typhi).